The following is a 194-amino-acid chain: Cytochrome c oxidase assembly protein CtaG (194 aa).

At 1–12 (MALRGPAKTVAQ) the chain is on the cytoplasmic side. The helical; Signal-anchor for type II membrane protein transmembrane segment at 13 to 35 (TVSVVIFMGALAWASVPLYDWFC) threads the bilayer. Residues 36–194 (RVTGFGGVTG…IEENSDTSLN (159 aa)) lie on the Periplasmic side of the membrane.

The protein belongs to the COX11/CtaG family.

The protein resides in the cell inner membrane. In terms of biological role, exerts its effect at some terminal stage of cytochrome c oxidase synthesis, probably by being involved in the insertion of the copper B into subunit I. This is Cytochrome c oxidase assembly protein CtaG from Roseobacter denitrificans (strain ATCC 33942 / OCh 114) (Erythrobacter sp. (strain OCh 114)).